We begin with the raw amino-acid sequence, 520 residues long: Glutamate--cysteine ligase (520 aa).

It belongs to the glutamate--cysteine ligase type 1 family. Type 1 subfamily.

The catalysed reaction is L-cysteine + L-glutamate + ATP = gamma-L-glutamyl-L-cysteine + ADP + phosphate + H(+). Its pathway is sulfur metabolism; glutathione biosynthesis; glutathione from L-cysteine and L-glutamate: step 1/2. The polypeptide is Glutamate--cysteine ligase (Sodalis glossinidius (strain morsitans)).